The chain runs to 212 residues: Uridine kinase (212 aa).

An ATP-binding site is contributed by glycine 13–serine 20.

Belongs to the uridine kinase family.

Its subcellular location is the cytoplasm. It carries out the reaction uridine + ATP = UMP + ADP + H(+). The catalysed reaction is cytidine + ATP = CMP + ADP + H(+). Its pathway is pyrimidine metabolism; CTP biosynthesis via salvage pathway; CTP from cytidine: step 1/3. It functions in the pathway pyrimidine metabolism; UMP biosynthesis via salvage pathway; UMP from uridine: step 1/1. The polypeptide is Uridine kinase (Shewanella baltica (strain OS155 / ATCC BAA-1091)).